An 880-amino-acid polypeptide reads, in one-letter code: Alanine--tRNA ligase (880 aa).

4 residues coordinate Zn(2+): His-567, His-571, Cys-669, and His-673.

This sequence belongs to the class-II aminoacyl-tRNA synthetase family. Requires Zn(2+) as cofactor.

It localises to the cytoplasm. It catalyses the reaction tRNA(Ala) + L-alanine + ATP = L-alanyl-tRNA(Ala) + AMP + diphosphate. Catalyzes the attachment of alanine to tRNA(Ala) in a two-step reaction: alanine is first activated by ATP to form Ala-AMP and then transferred to the acceptor end of tRNA(Ala). Also edits incorrectly charged Ser-tRNA(Ala) and Gly-tRNA(Ala) via its editing domain. The protein is Alanine--tRNA ligase of Bacillus cytotoxicus (strain DSM 22905 / CIP 110041 / 391-98 / NVH 391-98).